Here is a 1505-residue protein sequence, read N- to C-terminus: Probable RNA-directed RNA polymerase (1505 aa).

It belongs to the totiviridae RNA-directed RNA polymerase family.

The enzyme catalyses RNA(n) + a ribonucleoside 5'-triphosphate = RNA(n+1) + diphosphate. Its function is as follows. RNA-dependent RNA polymerase which replicates the viral genome. Catalyzes the transcription of fully conservative plus-strand genomic RNAs that are extruded from the virion into the cytoplasm where they function as mRNAs for translation of viral proteins and also as substrates for encapsidation to form new virions. Once encapsidated, the positive strand is converted to dsRNA by the RNA-directed RNA polymerase. Displays ssRNA-binding activity. In Saccharomyces cerevisiae virus L-A (ScV-L-A), this protein is Probable RNA-directed RNA polymerase (gag-pol).